The sequence spans 230 residues: MMHIPNRSIQAANIFFSSGAILLLIVGLIMEDWVELIPKVRKDKTTHSPWLGCCPPFWPEESLEVVRRIMRMTLNISIYLNLIIGLQFSYMISQNKCVHLLVGFLSFFAGCLLFYAIIVYHHKLNKGQYVYFVNYKTKWIAFTVYLTIALFLTCGIFCFIQSTNRCECMKFCIPHTESKSQEMIPSTIEVVSLPPRCAMPRSIVHVHSVTSKDGSLNRPHTQARRVTWAL.

Over 1–8 (MMHIPNRS) the chain is Cytoplasmic. The helical transmembrane segment at 9 to 29 (IQAANIFFSSGAILLLIVGLI) threads the bilayer. The Extracellular segment spans residues 30-71 (MEDWVELIPKVRKDKTTHSPWLGCCPPFWPEESLEVVRRIMR). Residues 72 to 92 (MTLNISIYLNLIIGLQFSYMI) traverse the membrane as a helical segment. Over 93–99 (SQNKCVH) the chain is Cytoplasmic. A helical membrane pass occupies residues 100–120 (LLVGFLSFFAGCLLFYAIIVY). Over 121–139 (HHKLNKGQYVYFVNYKTKW) the chain is Extracellular. Residues 140-160 (IAFTVYLTIALFLTCGIFCFI) traverse the membrane as a helical segment. Topologically, residues 161 to 230 (QSTNRCECMK…TQARRVTWAL (70 aa)) are cytoplasmic. Positions 224–228 (RRVTW) match the RVxF motif.

Interacts (via RVxF motif) with PPP1CC. Expressed in testis, epididymis and spermatozoa (at protein level). Not expressed in brain, heart, lung, liver, spleen, kidney and skeletal muscle.

Its subcellular location is the cytoplasmic vesicle. The protein localises to the secretory vesicle. The protein resides in the acrosome membrane. Probably inhibits protein phosphatase 1 (PP1) in sperm via binding to catalytic subunit PPP1CC. The sequence is that of Transmembrane protein 225 (Tmem225) from Mus musculus (Mouse).